A 207-amino-acid polypeptide reads, in one-letter code: Hydrogenase expression/formation protein HoxM (207 aa).

Ni(2+) contacts are provided by glutamate 19, aspartate 65, and histidine 96.

It belongs to the peptidase A31 family.

Its function is as follows. Not known. Could be involved in the processing of hydrogenase. This Azotobacter vinelandii protein is Hydrogenase expression/formation protein HoxM (hoxM).